Reading from the N-terminus, the 91-residue chain is Small ribosomal subunit protein uS19 (91 aa).

It belongs to the universal ribosomal protein uS19 family.

Functionally, protein S19 forms a complex with S13 that binds strongly to the 16S ribosomal RNA. The sequence is that of Small ribosomal subunit protein uS19 from Saccharophagus degradans (strain 2-40 / ATCC 43961 / DSM 17024).